We begin with the raw amino-acid sequence, 323 residues long: Putative divalent cation/proton antiporter TMEM165 (323 aa).

The first 33 residues, 1 to 33, serve as a signal peptide directing secretion; it reads MAASARGSGRAPTRRLLVLLLLPLLWAPAGVRA. Over 34-88 the chain is Lumenal; the sequence is GPEEDLSHRNQEPPAPAQQLQPQPAAVQGLEPARAEKGFTPAAPVHTNREDAATQ. Positions 35–44 are enriched in basic and acidic residues; sequence PEEDLSHRNQ. Positions 35–60 are disordered; the sequence is PEEDLSHRNQEPPAPAQQLQPQPAAV. Residues 50-59 are compositionally biased toward low complexity; the sequence is AQQLQPQPAA. Residues 89–109 traverse the membrane as a helical segment; the sequence is ANLGFIHAFVAAISVIIVSEL. Over 110–126 the chain is Cytoplasmic; that stretch reads GDKTFFIAAIMAMRYNR. A helical transmembrane segment spans residues 127–147; it reads LTVLAGAMLALALMTCLSVLF. The Lumenal segment spans residues 148–151; it reads GYAT. The helical transmembrane segment at 152-172 threads the bilayer; the sequence is TVIPRVYTYYVSTALFAIFGI. Topologically, residues 173 to 227 are cytoplasmic; the sequence is RMLREGLKMSPDEGQEELEEVQAELKKKDEEFQRTKLLNGPDVETGTSTAIPQKK. A coiled-coil region spans residues 184–211; sequence DEGQEELEEVQAELKKKDEEFQRTKLLN. A helical transmembrane segment spans residues 228-248; the sequence is WLHFISPIFVQALTLTFLAEW. Topologically, residues 249–266 are lumenal; it reads GDRSQLTTIVLAAREDPY. The helical transmembrane segment at 267–287 threads the bilayer; sequence GVAVGGTVGHCLCTGLAVIGG. At 288 to 298 the chain is on the cytoplasmic side; the sequence is RMIAQKISVRT. A helical membrane pass occupies residues 299 to 319; that stretch reads VTIIGGIVFLAFAFSALFISP. The Lumenal segment spans residues 320–323; sequence ESGF.

It belongs to the GDT1 family.

The protein localises to the golgi apparatus membrane. The enzyme catalyses Ca(2+)(in) + n H(+)(out) = Ca(2+)(out) + n H(+)(in). The catalysed reaction is Mn(2+)(in) + n H(+)(out) = Mn(2+)(out) + n H(+)(in). Putative divalent cation:proton antiporter that exchanges calcium or manganese ions for protons across the Golgi membrane. Mediates the reversible transport of calcium or manganese to the Golgi lumen driven by the proton gradient and possibly the membrane potential generated by V-ATPase. Provides calcium or manganese cofactors to resident Golgi enzymes and contributes to the maintenance of an acidic luminal Golgi pH required for proper functioning of the secretory pathway. Promotes Ca(2+) storage within the Golgi lumen of the mammary epithelial cells to be then secreted into milk. The transport mechanism and stoichiometry remains to be elucidated. The protein is Putative divalent cation/proton antiporter TMEM165 of Rattus norvegicus (Rat).